The chain runs to 435 residues: Mitochondrial distribution and morphology protein 12 (435 aa).

Residues Met1–Val435 form the SMP-LTD domain. 2 disordered regions span residues Asp73 to His113 and Trp186 to Glu268. Basic and acidic residues predominate over residues Thr96 to His113. Residues Ser218–Ser238 show a composition bias toward low complexity. A compositionally biased stretch (basic and acidic residues) spans His251–Glu268.

The protein belongs to the MDM12 family. Component of the ER-mitochondria encounter structure (ERMES) or MDM complex, composed of mmm1, mdm10, mdm12 and mdm34. A mmm1 homodimer associates with one molecule of mdm12 on each side in a pairwise head-to-tail manner, and the SMP-LTD domains of mmm1 and mdm12 generate a continuous hydrophobic tunnel for phospholipid trafficking.

The protein localises to the mitochondrion outer membrane. It localises to the endoplasmic reticulum membrane. Component of the ERMES/MDM complex, which serves as a molecular tether to connect the endoplasmic reticulum (ER) and mitochondria. Components of this complex are involved in the control of mitochondrial shape and protein biogenesis, and function in nonvesicular lipid trafficking between the ER and mitochondria. Mdm12 is required for the interaction of the ER-resident membrane protein mmm1 and the outer mitochondrial membrane-resident beta-barrel protein mdm10. The mdm12-mmm1 subcomplex functions in the major beta-barrel assembly pathway that is responsible for biogenesis of all mitochondrial outer membrane beta-barrel proteins, and acts in a late step after the SAM complex. The mdm10-mdm12-mmm1 subcomplex further acts in the TOM40-specific pathway after the action of the mdm12-mmm1 complex. Essential for establishing and maintaining the structure of mitochondria and maintenance of mtDNA nucleoids. This Aspergillus niger (strain ATCC MYA-4892 / CBS 513.88 / FGSC A1513) protein is Mitochondrial distribution and morphology protein 12.